We begin with the raw amino-acid sequence, 298 residues long: Oxygen-dependent coproporphyrinogen-III oxidase (298 aa).

S92 contacts substrate. A divalent metal cation is bound by residues H96 and H106. Residue H106 is the Proton donor of the active site. 108 to 110 (NVR) contributes to the substrate binding site. Residues H145 and H175 each contribute to the a divalent metal cation site. Residues 239–274 (YVEFNLVYDRGTLFGLQSGGRSESILMSLPPRVRWE) form an important for dimerization region. 257–259 (GGR) contacts substrate.

Belongs to the aerobic coproporphyrinogen-III oxidase family. Homodimer. Requires a divalent metal cation as cofactor.

Its subcellular location is the cytoplasm. It carries out the reaction coproporphyrinogen III + O2 + 2 H(+) = protoporphyrinogen IX + 2 CO2 + 2 H2O. The protein operates within porphyrin-containing compound metabolism; protoporphyrin-IX biosynthesis; protoporphyrinogen-IX from coproporphyrinogen-III (O2 route): step 1/1. Involved in the heme biosynthesis. Catalyzes the aerobic oxidative decarboxylation of propionate groups of rings A and B of coproporphyrinogen-III to yield the vinyl groups in protoporphyrinogen-IX. In Stenotrophomonas maltophilia (strain R551-3), this protein is Oxygen-dependent coproporphyrinogen-III oxidase.